A 190-amino-acid chain; its full sequence is Protein FAM210B, mitochondrial (190 aa).

The N-terminal 58 residues, 1 to 58, are a transit peptide targeting the mitochondrion; sequence MAGLLTLLGPAGRVSTRLRPLAPWLLGTATSCAPPLWALALSHPVPDARLLRTARGDC. Basic and acidic residues predominate over residues 56 to 66; the sequence is GDCLSRQEPNR. The disordered stretch occupies residues 56–81; that stretch reads GDCLSRQEPNRTPEPGGSVTGTEKKL. Positions 78–189 constitute a DUF1279 domain; the sequence is EKKLSRTQQL…VGLFKPPATK (112 aa). The next 2 helical transmembrane spans lie at 97–117 and 148–168; these read VGVSMHIGISLVSLGIFYTVV and FVVAYAIHKLFAPVRISITLV.

This sequence belongs to the FAM210 family. In terms of tissue distribution, expressed in late erythroblast differentiation stages.

It is found in the mitochondrion. The protein resides in the mitochondrion outer membrane. In terms of biological role, plays a role in erythroid differentiation. Involved in cell proliferation and tumor cell growth suppression. Involved in the metabolic reprogramming of cancer cells in a PDK4-dependent manner. In Mus musculus (Mouse), this protein is Protein FAM210B, mitochondrial.